The sequence spans 621 residues: 1-deoxy-D-xylulose-5-phosphate synthase (621 aa).

Thiamine diphosphate contacts are provided by residues histidine 80 and 121–123 (GHS). Aspartate 152 contacts Mg(2+). Thiamine diphosphate is bound by residues 153–154 (GA), asparagine 181, tyrosine 288, and glutamate 370. Asparagine 181 serves as a coordination point for Mg(2+).

It belongs to the transketolase family. DXPS subfamily. As to quaternary structure, homodimer. The cofactor is Mg(2+). Thiamine diphosphate serves as cofactor.

It carries out the reaction D-glyceraldehyde 3-phosphate + pyruvate + H(+) = 1-deoxy-D-xylulose 5-phosphate + CO2. It functions in the pathway metabolic intermediate biosynthesis; 1-deoxy-D-xylulose 5-phosphate biosynthesis; 1-deoxy-D-xylulose 5-phosphate from D-glyceraldehyde 3-phosphate and pyruvate: step 1/1. Its function is as follows. Catalyzes the acyloin condensation reaction between C atoms 2 and 3 of pyruvate and glyceraldehyde 3-phosphate to yield 1-deoxy-D-xylulose-5-phosphate (DXP). The polypeptide is 1-deoxy-D-xylulose-5-phosphate synthase (Aeromonas hydrophila subsp. hydrophila (strain ATCC 7966 / DSM 30187 / BCRC 13018 / CCUG 14551 / JCM 1027 / KCTC 2358 / NCIMB 9240 / NCTC 8049)).